The following is a 263-amino-acid chain: Acyl-[acyl-carrier-protein]--UDP-N-acetylglucosamine O-acyltransferase (263 aa).

This sequence belongs to the transferase hexapeptide repeat family. LpxA subfamily. Homotrimer.

The protein resides in the cytoplasm. The enzyme catalyses a (3R)-hydroxyacyl-[ACP] + UDP-N-acetyl-alpha-D-glucosamine = a UDP-3-O-[(3R)-3-hydroxyacyl]-N-acetyl-alpha-D-glucosamine + holo-[ACP]. It functions in the pathway glycolipid biosynthesis; lipid IV(A) biosynthesis; lipid IV(A) from (3R)-3-hydroxytetradecanoyl-[acyl-carrier-protein] and UDP-N-acetyl-alpha-D-glucosamine: step 1/6. Its function is as follows. Involved in the biosynthesis of lipid A, a phosphorylated glycolipid that anchors the lipopolysaccharide to the outer membrane of the cell. This chain is Acyl-[acyl-carrier-protein]--UDP-N-acetylglucosamine O-acyltransferase, found in Caulobacter vibrioides (strain ATCC 19089 / CIP 103742 / CB 15) (Caulobacter crescentus).